We begin with the raw amino-acid sequence, 149 residues long: Aquaporin-like protein 2 (149 aa).

The tract at residues 1–35 (MSNESNDLEKNISHLDPTGVDNAYIPPEQPETKHS) is disordered. Residues 1–47 (MSNESNDLEKNISHLDPTGVDNAYIPPEQPETKHSRFNIDRDTLRNH) are Cytoplasmic-facing. A helical membrane pass occupies residues 48–68 (FIAAVGEFCGTFMFLWCAYVI). At 69–89 (CNVANHDVALTTEPEGSHPGQ) the chain is on the extracellular side. Residues 90–110 (LIMIALGFGFSVMFSIWCFWW) form a helical membrane-spanning segment. At 111-149 (GFEPSRFSLFVFGQSHLSSQMCSDVVSSDHCWDGCWWCR) the chain is on the cytoplasmic side.

It belongs to the MIP/aquaporin (TC 1.A.8) family.

It localises to the endoplasmic reticulum membrane. The protein resides in the cell membrane. Functionally, water channel required to facilitate the transport of water across membranes. Involved in freeze tolerance, osmotolerance and cell flocculation in liquid cultures. Is non-functional in most laboratory strains. This is Aquaporin-like protein 2 (AQY2-2) from Saccharomyces cerevisiae (strain RM11-1a) (Baker's yeast).